A 111-amino-acid polypeptide reads, in one-letter code: Iron-sulfur cluster assembly protein CyaY (111 aa).

Belongs to the frataxin family.

Involved in iron-sulfur (Fe-S) cluster assembly. May act as a regulator of Fe-S biogenesis. The protein is Iron-sulfur cluster assembly protein CyaY of Cupriavidus metallidurans (strain ATCC 43123 / DSM 2839 / NBRC 102507 / CH34) (Ralstonia metallidurans).